The following is an 80-amino-acid chain: Conotoxin Vi6.2 (80 aa).

A signal peptide spans 1 to 22 (MKLTCVLITTVLFLTASQLITA). The propeptide occupies 23–47 (DYSRDKRQYRAVRLRDEMRNFKGAR). Disulfide bonds link C49–C62, C56–C67, and C61–C77. 2 positions are modified to 4-hydroxyproline: P60 and P63.

This sequence belongs to the conotoxin O1 superfamily. As to expression, expressed by the venom duct.

Its subcellular location is the secreted. Ion channel inhibitor that inhibits the increase in intracellular calcium upon depolarization in DRG neurons. In vivo, both intraperitoneal and intracranial injections into mice induce hyperactivity. The sequence is that of Conotoxin Vi6.2 from Conus virgo (Virgin cone).